The sequence spans 285 residues: Bifunctional protein FolD (285 aa).

Residues 163-165 (GRS) and serine 188 contribute to the NADP(+) site.

Belongs to the tetrahydrofolate dehydrogenase/cyclohydrolase family. In terms of assembly, homodimer.

The catalysed reaction is (6R)-5,10-methylene-5,6,7,8-tetrahydrofolate + NADP(+) = (6R)-5,10-methenyltetrahydrofolate + NADPH. The enzyme catalyses (6R)-5,10-methenyltetrahydrofolate + H2O = (6R)-10-formyltetrahydrofolate + H(+). It participates in one-carbon metabolism; tetrahydrofolate interconversion. In terms of biological role, catalyzes the oxidation of 5,10-methylenetetrahydrofolate to 5,10-methenyltetrahydrofolate and then the hydrolysis of 5,10-methenyltetrahydrofolate to 10-formyltetrahydrofolate. The polypeptide is Bifunctional protein FolD (Lactococcus lactis subsp. cremoris (strain MG1363)).